The sequence spans 161 residues: Phosphopantetheine adenylyltransferase (161 aa).

Thr-10 lines the substrate pocket. Residues 10 to 11 and His-18 contribute to the ATP site; that span reads TF. Substrate is bound by residues Lys-42, Met-74, and Arg-88. Residues 89–91, Glu-99, and 124–130 contribute to the ATP site; these read GLR and WSFISSS.

It belongs to the bacterial CoaD family. In terms of assembly, homohexamer. Requires Mg(2+) as cofactor.

The protein localises to the cytoplasm. The enzyme catalyses (R)-4'-phosphopantetheine + ATP + H(+) = 3'-dephospho-CoA + diphosphate. It functions in the pathway cofactor biosynthesis; coenzyme A biosynthesis; CoA from (R)-pantothenate: step 4/5. Its function is as follows. Reversibly transfers an adenylyl group from ATP to 4'-phosphopantetheine, yielding dephospho-CoA (dPCoA) and pyrophosphate. The protein is Phosphopantetheine adenylyltransferase of Serratia marcescens.